Here is a 501-residue protein sequence, read N- to C-terminus: Envelope glycoprotein C homolog (501 aa).

Positions 1-27 are cleaved as a signal peptide; sequence MLTPRVLRALGWTGLFFLLLSPSNVLG. At 28-465 the chain is on the virion surface side; the sequence is ASLSRDLETP…DATPSARGTP (438 aa). Asn-46 carries N-linked (GlcNAc...) asparagine; by host glycosylation. Positions 53–86 are disordered; it reads PLTEVPHAPSTESVSTNSESTNEHTITETTGKNA. Residues 62–72 show a composition bias toward low complexity; sequence STESVSTNSES. N-linked (GlcNAc...) asparagine; by host glycosylation is found at Asn-91, Asn-100, Asn-120, Asn-212, Asn-354, Asn-400, and Asn-429. The 99-residue stretch at 258–356 folds into the Ig-like domain; sequence PASVDVLAPP…GDMISTTNAT (99 aa). A helical membrane pass occupies residues 466–492; that stretch reads MVITVTAVLGLAVILGMGIIMTALCLY. The Cytoplasmic portion of the chain corresponds to 493–501; the sequence is NSTRKNIRL.

It belongs to the herpesviridae glycoprotein C family.

The protein resides in the secreted. Its subcellular location is the host cell membrane. Functionally, may play an immunoevasive role in the pathogenesis of Marek's disease. It is a candidate for causing the early-stage immunosuppression that occurs after MDHV infection. This chain is Envelope glycoprotein C homolog (gC), found in Gallus gallus (Chicken).